Here is a 1608-residue protein sequence, read N- to C-terminus: Protein REDUCED CHLOROPLAST COVERAGE 3 (1608 aa).

A compositionally biased stretch (basic residues) spans Met-1–Asn-12. Disordered stretches follow at residues Met-1–Arg-22 and Val-278–Gly-303. Residues Glu-288–Pro-564 enclose the Clu domain. TPR repeat units follow at residues Gly-848–Val-881, Ala-890–Glu-923, Met-932–Thr-965, and Ala-974–Leu-1007. Disordered stretches follow at residues Val-1194–Asp-1226, His-1238–Ala-1292, Lys-1369–Asp-1400, Thr-1466–Asp-1499, and Pro-1531–Ala-1552. The Nuclear localization signal signature appears at Gly-1217–Gln-1224. 2 stretches are compositionally biased toward polar residues: residues Gln-1242 to Ser-1265 and Gln-1373 to Glu-1385. Positions Ser-1535–Thr-1546 are enriched in polar residues.

It is found in the nucleus. It localises to the cytoplasm. The protein resides in the cytosol. Functionally, may act as the scaffold of a protein complex, which sequesters key factors that are required for the G2 to M transition in meristematic tissues. Together with REC2, REC3 and FMT/CLU, contributes to the establishment of the cellular volume devoted to the chloroplast compartment. The chain is Protein REDUCED CHLOROPLAST COVERAGE 3 from Arabidopsis thaliana (Mouse-ear cress).